The primary structure comprises 189 residues: MALSFSLLMAVLVLSYKSICSLGCDLPQTHSLGNRRALILLAQMGRISHFSCLKDRYDFGFPQEVFDGNQFQKAQAISAFHEMIQQTFNLFSTKDSSAAWDETLLDKFYIELFQQLNDLEACVTQEVGVEEIALMNEDSILAVRKYFQRITLYLMGKKYSPCAWEVVRAEIMRSFSFSTNLQKGLRRKD.

Positions 1–23 (MALSFSLLMAVLVLSYKSICSLG) are cleaved as a signal peptide. 2 disulfide bridges follow: Cys24–Cys122 and Cys52–Cys162.

It belongs to the alpha/beta interferon family.

The protein resides in the secreted. Produced by macrophages, IFN-alpha have antiviral activities. Interferon stimulates the production of two enzymes: a protein kinase and an oligoadenylate synthetase. The sequence is that of Interferon alpha-16 (IFNA16) from Homo sapiens (Human).